We begin with the raw amino-acid sequence, 192 residues long: MSRTKKTRRITDIMPARKADKKPEQPKLSGGKNRKPTRYELDAKAREEKKKRKHKGLPTGSRNVDPAEQKKAAVKEVKDPRIGSRKKIPLMVEFVNKPEKGQIIKPVAVEEYKPHLSPELELEQLENNEILNQLLDEIEAGKTLSAKDQKFVDECLDRIDELMTELGIQDEDEDNGDALLRQFETMDINQFR.

The tract at residues 1–80 (MSRTKKTRRI…KAAVKEVKDP (80 aa)) is disordered. Basic and acidic residues-rich tracts occupy residues 9 to 25 (RITDIMPARKADKKPEQ), 37 to 48 (TRYELDAKAREE), and 65 to 80 (DPAEQKKAAVKEVKDP).

It belongs to the YihI family. As to quaternary structure, interacts with Der.

A GTPase-activating protein (GAP) that modifies Der/EngA GTPase function. May play a role in ribosome biogenesis. The polypeptide is Der GTPase-activating protein YihI (Actinobacillus pleuropneumoniae serotype 7 (strain AP76)).